We begin with the raw amino-acid sequence, 297 residues long: 4-hydroxy-tetrahydrodipicolinate synthase (297 aa).

A pyruvate-binding site is contributed by Thr46. Tyr136 acts as the Proton donor/acceptor in catalysis. The active-site Schiff-base intermediate with substrate is the Lys165. Thr206 contributes to the pyruvate binding site.

The protein belongs to the DapA family. In terms of assembly, homotetramer; dimer of dimers.

It is found in the cytoplasm. The catalysed reaction is L-aspartate 4-semialdehyde + pyruvate = (2S,4S)-4-hydroxy-2,3,4,5-tetrahydrodipicolinate + H2O + H(+). Its pathway is amino-acid biosynthesis; L-lysine biosynthesis via DAP pathway; (S)-tetrahydrodipicolinate from L-aspartate: step 3/4. Catalyzes the condensation of (S)-aspartate-beta-semialdehyde [(S)-ASA] and pyruvate to 4-hydroxy-tetrahydrodipicolinate (HTPA). The protein is 4-hydroxy-tetrahydrodipicolinate synthase of Sulfurimonas denitrificans (strain ATCC 33889 / DSM 1251) (Thiomicrospira denitrificans (strain ATCC 33889 / DSM 1251)).